Consider the following 185-residue polypeptide: Sulfopyruvate decarboxylase subunit beta (185 aa).

It belongs to the TPP enzyme family. Heterododecamer composed of 6 subunits alpha and 6 subunits beta. It depends on thiamine diphosphate as a cofactor.

The enzyme catalyses 3-sulfopyruvate + H(+) = sulfoacetaldehyde + CO2. It participates in cofactor biosynthesis; coenzyme M biosynthesis; sulfoacetaldehyde from phosphoenolpyruvate and sulfite: step 4/4. Functionally, involved in the biosynthesis of the coenzyme M (2-mercaptoethanesulfonic acid). Catalyzes the decarboxylation of sulfopyruvate to sulfoacetaldehyde. The sequence is that of Sulfopyruvate decarboxylase subunit beta from Methanococcus maripaludis (strain DSM 14266 / JCM 13030 / NBRC 101832 / S2 / LL).